The sequence spans 171 residues: NADH-ubiquinone oxidoreductase chain 6 (171 aa).

5 helical membrane passes run 1 to 21 (MYVM…ISSK), 25 to 44 (IYGG…IIMG), 49 to 71 (FMGL…YTTA), 85 to 105 (VVIW…VAWM), and 150 to 170 (WFAA…IEII).

The protein belongs to the complex I subunit 6 family. Core subunit of respiratory chain NADH dehydrogenase (Complex I) which is composed of 45 different subunits.

The protein resides in the mitochondrion inner membrane. It carries out the reaction a ubiquinone + NADH + 5 H(+)(in) = a ubiquinol + NAD(+) + 4 H(+)(out). Core subunit of the mitochondrial membrane respiratory chain NADH dehydrogenase (Complex I) which catalyzes electron transfer from NADH through the respiratory chain, using ubiquinone as an electron acceptor. Essential for the catalytic activity and assembly of complex I. The polypeptide is NADH-ubiquinone oxidoreductase chain 6 (MT-ND6) (Lemur catta (Ring-tailed lemur)).